We begin with the raw amino-acid sequence, 322 residues long: Porphobilinogen deaminase (322 aa).

Cys-252 bears the S-(dipyrrolylmethanemethyl)cysteine mark.

Belongs to the HMBS family. As to quaternary structure, monomer. The cofactor is dipyrromethane.

The catalysed reaction is 4 porphobilinogen + H2O = hydroxymethylbilane + 4 NH4(+). It participates in porphyrin-containing compound metabolism; protoporphyrin-IX biosynthesis; coproporphyrinogen-III from 5-aminolevulinate: step 2/4. Functionally, tetrapolymerization of the monopyrrole PBG into the hydroxymethylbilane pre-uroporphyrinogen in several discrete steps. The polypeptide is Porphobilinogen deaminase (Caulobacter vibrioides (strain ATCC 19089 / CIP 103742 / CB 15) (Caulobacter crescentus)).